Reading from the N-terminus, the 138-residue chain is Small ribosomal subunit protein uS11c (138 aa).

The interval Met-1–Arg-24 is disordered. Positions Gly-9 to Arg-24 are enriched in basic residues.

This sequence belongs to the universal ribosomal protein uS11 family. In terms of assembly, part of the 30S ribosomal subunit.

It is found in the plastid. The protein resides in the chloroplast. The chain is Small ribosomal subunit protein uS11c from Chloranthus spicatus (Chulantree).